The following is a 208-amino-acid chain: Small ribosomal subunit protein uS2 (208 aa).

It belongs to the universal ribosomal protein uS2 family.

The chain is Small ribosomal subunit protein uS2 from Cenarchaeum symbiosum (strain A).